Consider the following 239-residue polypeptide: Ribosomal RNA small subunit methyltransferase G (239 aa).

S-adenosyl-L-methionine is bound by residues Gly77, Phe82, 128–129, and Arg147; that span reads AE. The segment at 216-239 is disordered; it reads KKQSQTPKKFPRKPGTPNKSPIEG.

It belongs to the methyltransferase superfamily. RNA methyltransferase RsmG family.

The protein localises to the cytoplasm. Functionally, specifically methylates the N7 position of guanine in position 535 of 16S rRNA. This is Ribosomal RNA small subunit methyltransferase G from Bacillus licheniformis (strain ATCC 14580 / DSM 13 / JCM 2505 / CCUG 7422 / NBRC 12200 / NCIMB 9375 / NCTC 10341 / NRRL NRS-1264 / Gibson 46).